The chain runs to 397 residues: Yellow-related salivary protein LJM111 (397 aa).

A signal peptide spans 1-18 (MKLFFFLYTFGLVQTIFG).

It belongs to the major royal jelly protein family. As to expression, salivary gland (at protein level).

Its subcellular location is the secreted. In terms of biological role, probably modulates blood feeding of sand flies on vertebrate species by binding and sequestering different mediators involved in the host response. Binds biogenic amines. Binds adrenaline and noradrenaline with high affinity. Binds serotonin. Binds dopamine and octopamine. Exhibits anti-inflammatory effects in the host: reduces IL17A, TNF-alpha (TNF) and IFN-gamma (IFNG) production by host lymph node cells, suppresses expression of MHC-II and CD86, reduces TNF-alpha production and increases IL10 production, in host bone marrow-derived dendritic cells (BMDCs) stimulated by lipopolysaccharides. Reduces pain in mouse mechanical hypernociception model. The protein is Yellow-related salivary protein LJM111 of Lutzomyia longipalpis (Sand fly).